Consider the following 250-residue polypeptide: Triosephosphate isomerase, glycosomal (250 aa).

Substrate contacts are provided by asparagine 11 and lysine 13. The active-site Electrophile is the histidine 95. Residue glutamate 167 is the Proton acceptor of the active site.

Belongs to the triosephosphate isomerase family. As to quaternary structure, homodimer.

Its subcellular location is the glycosome. It catalyses the reaction D-glyceraldehyde 3-phosphate = dihydroxyacetone phosphate. It participates in carbohydrate biosynthesis; gluconeogenesis. Its pathway is carbohydrate degradation; glycolysis; D-glyceraldehyde 3-phosphate from glycerone phosphate: step 1/1. The polypeptide is Triosephosphate isomerase, glycosomal (Trypanosoma brucei brucei).